Reading from the N-terminus, the 300-residue chain is tRNA uridine(34) hydroxylase (300 aa).

The Rhodanese domain maps to 128 to 222 (ADPEVIVVDT…YLEDVPQAQS (95 aa)). C182 functions as the Cysteine persulfide intermediate in the catalytic mechanism.

This sequence belongs to the TrhO family.

The catalysed reaction is uridine(34) in tRNA + AH2 + O2 = 5-hydroxyuridine(34) in tRNA + A + H2O. Its function is as follows. Catalyzes oxygen-dependent 5-hydroxyuridine (ho5U) modification at position 34 in tRNAs. The chain is tRNA uridine(34) hydroxylase from Deinococcus radiodurans (strain ATCC 13939 / DSM 20539 / JCM 16871 / CCUG 27074 / LMG 4051 / NBRC 15346 / NCIMB 9279 / VKM B-1422 / R1).